A 701-amino-acid chain; its full sequence is Ubiquitin thioesterase zranb1 (701 aa).

A RanBP2-type 1 zinc finger spans residues 3-33 (EHGIKWACEYCTYENWPSAIKCTMCRAPRPS). Zn(2+)-binding residues include Cys10, Cys13, Cys24, and Cys27. Positions 38–59 (TEEPFKNSTPDVGSMERESGSP) are disordered. The RanBP2-type 2 zinc finger occupies 79 to 108 (TSTKWSCHMCTYLNWPRAIRCTQCLSQRRT). Cys85, Cys88, Cys99, and Cys102 together coordinate Zn(2+). Residues 108 to 129 (TRSPTESPQSSGSSLRAIPSPI) form a disordered region. The segment covering 111–121 (PTESPQSSGSS) has biased composition (low complexity). The RanBP2-type 3 zinc finger occupies 143–173 (IKGQHWTCSACTYENCAKAKKCVVCDHPTPN). Zn(2+) contacts are provided by Cys150, Cys153, Cys164, and Cys167. The segment at 198 to 220 (WRGGCSSSNSQRRSPPTSKRDSD) is disordered. A compositionally biased stretch (polar residues) spans 202–214 (CSSSNSQRRSPPT). ANK repeat units follow at residues 253-283 (RKTD…SGGD) and 306-333 (YTLV…QHAA). An OTU domain is found at 425 to 585 (LYALWNRTAG…RGHFSALVAM (161 aa)). Cys436 (nucleophile) is an active-site residue. His578 serves as the catalytic Proton acceptor.

Belongs to the peptidase C64 family.

The protein localises to the cytoplasm. The protein resides in the nucleus. It carries out the reaction Thiol-dependent hydrolysis of ester, thioester, amide, peptide and isopeptide bonds formed by the C-terminal Gly of ubiquitin (a 76-residue protein attached to proteins as an intracellular targeting signal).. Functionally, ubiquitin thioesterase, which specifically hydrolyzes 'Lys-29'-linked and 'Lys-33'-linked diubiquitin. Also cleaves 'Lys-63'-linked chains, but with 40-fold less efficiency compared to 'Lys-29'-linked ones. Positive regulator of the Wnt signaling pathway that deubiquitinates apc protein, a negative regulator of Wnt-mediated transcription. Acts as a regulator of autophagy by mediating deubiquitination of pik3c3/vps34, thereby promoting autophagosome maturation. Plays a role in the regulation of cell morphology and cytoskeletal organization. Required in the stress fiber dynamics and cell migration. The chain is Ubiquitin thioesterase zranb1 (zranb1) from Xenopus tropicalis (Western clawed frog).